We begin with the raw amino-acid sequence, 302 residues long: Late embryogenesis abundant protein D-29 (302 aa).

3 disordered regions span residues 25–93 (HMPS…AKEY), 168–193 (VKNAAKGKSSEMRQATTEKARELADS), and 205–302 (AKEK…NHKN). 2 stretches are compositionally biased toward basic and acidic residues: residues 34–70 (RDYSKLKTKTEEATDEHHSRTQQAKDELKSKADHAAN) and 79–93 (AKDRASEVGKEAKEY). Residues 205–286 (AKEKVRDMAD…KAEETIESAK (82 aa)) show a composition bias toward basic and acidic residues.

This sequence belongs to the LEA type 1 family.

LEA protein are late embryonic proteins abundant in higher plant seed embryos. There are two subsets of LEA proteins (5a and 5b), the first ones are expressed when the cotyledon weight reach 80 mg and the second set are expressed above 100 mg. The function of those proteins is not known. The polypeptide is Late embryogenesis abundant protein D-29 (Gossypium hirsutum (Upland cotton)).